Consider the following 618-residue polypeptide: uncharacterized protein (618 aa).

Positions 18 to 47 (SCQRCRQRKIKCDRLHPCFQCVKSNSQCFY) form a DNA-binding region, zn(2)-C6 fungal-type. Residue S598 is modified to Phosphoserine.

The protein localises to the nucleus. This is an uncharacterized protein from Schizosaccharomyces pombe (strain 972 / ATCC 24843) (Fission yeast).